The sequence spans 210 residues: Mitochondrial coenzyme A diphosphatase NUDT8 (210 aa).

Residues 25–172 (LRSRPAAAAV…HFSYTLPVFL (148 aa)) enclose the Nudix hydrolase domain. Residue Lys-70 is modified to N6-succinyllysine. The Nudix box motif lies at 70 to 91 (KCDPDDQDVIHTALRETQEELG). Mg(2+)-binding residues include Glu-85 and Glu-89. The residue at position 96 (Lys-96) is an N6-succinyllysine.

This sequence belongs to the Nudix hydrolase family. As to quaternary structure, monomer. The cofactor is Mg(2+). It depends on Mn(2+) as a cofactor. Expressed at the highest levels in the kidneys, heart, brown adipose tissue and liver (at protein level). Expressed at lower levels in the brain, skeletal muscle, and white adipose tissue (at protein level).

The protein resides in the mitochondrion. It carries out the reaction an acyl-CoA + H2O = an acyl-4'-phosphopantetheine + adenosine 3',5'-bisphosphate + 2 H(+). The enzyme catalyses CoA + H2O = (R)-4'-phosphopantetheine + adenosine 3',5'-bisphosphate + 2 H(+). It catalyses the reaction acetyl-CoA + H2O = S-acetyl-4'-phosphopantetheine + adenosine 3',5'-bisphosphate + 2 H(+). The catalysed reaction is butanoyl-CoA + H2O = S-butanoyl-4'-phosphopantetheine + adenosine 3',5'-bisphosphate + 2 H(+). It carries out the reaction hexanoyl-CoA + H2O = hexanoyl-4'-phosphopantetheine + adenosine 3',5'-bisphosphate + 2 H(+). The enzyme catalyses octanoyl-CoA + H2O = S-octanoyl-4'-phosphopantetheine + adenosine 3',5'-bisphosphate + 2 H(+). It catalyses the reaction propanoyl-CoA + H2O = propanoyl-4'-phosphopantetheine + adenosine 3',5'-bisphosphate + 2 H(+). The catalysed reaction is malonyl-CoA + H2O = malonyl-4'-phosphopantetheine + adenosine 3',5'-bisphosphate + 2 H(+). It carries out the reaction succinyl-CoA + H2O = succinyl-4'-phosphopantetheine + adenosine 3',5'-bisphosphate + 2 H(+). The enzyme catalyses a 5'-end CoA-ribonucleoside in mRNA + H2O = a 5'-end phospho-adenosine-phospho-ribonucleoside in mRNA + (R)-4'-phosphopantetheine + 2 H(+). Its function is as follows. Acyl-CoA diphosphatase that mediates the hydrolysis of a wide range of CoA and CoA esters yielding 3',5'-ADP and the corresponding 4'-phosphopantetheine derivative as products. Hydrolyzes short- and medium-chain acyl-CoAs, exhibiting the highest activity toward free CoA, hexanoyl-CoA, and octanoyl-CoA and the lowest activity against acetyl-CoA. Exhibits decapping activity towards dpCoA-capped RNAs in vitro. In Mus musculus (Mouse), this protein is Mitochondrial coenzyme A diphosphatase NUDT8 (Nudt8).